The sequence spans 695 residues: HIPL1 protein (695 aa).

The first 23 residues, Met-1–Ala-23, serve as a signal peptide directing secretion. 15 N-linked (GlcNAc...) asparagine glycosylation sites follow: Asn-37, Asn-67, Asn-107, Asn-113, Asn-128, Asn-151, Asn-175, Asn-190, Asn-208, Asn-337, Asn-429, Asn-511, Asn-527, Asn-641, and Asn-648. Residue Ser-665 is the site of GPI-anchor amidated serine attachment. Residues Ser-666–Asn-695 constitute a propeptide, removed in mature form.

Belongs to the PQQ oxidoreductase GdhB family. It depends on pyrroloquinoline quinone as a cofactor.

Its subcellular location is the cell membrane. The polypeptide is HIPL1 protein (HIPL1) (Arabidopsis thaliana (Mouse-ear cress)).